Consider the following 306-residue polypeptide: Probable protein ABIL1 (306 aa).

Positions 200 to 236 (KNSKTNGARQSEFVLEETKATKPASRGKEPSTSPLPK) are disordered.

It belongs to the ABI family. Binds SCAR.

It is found in the cytoplasm. It localises to the cytoskeleton. Its function is as follows. Involved in regulation of actin and microtubule organization. Part of a WAVE complex that activates the Arp2/3 complex. This is Probable protein ABIL1 from Oryza sativa subsp. japonica (Rice).